Here is a 274-residue protein sequence, read N- to C-terminus: Large ribosomal subunit protein uL2cz/uL2cy (274 aa).

Positions 225-274 are disordered; that stretch reads NPVDHPHGGGEGRAPIGRKKPTTPWGYPALGRRSRKRKKYSDSFILRRRK.

The protein belongs to the universal ribosomal protein uL2 family. Part of the 50S ribosomal subunit.

It is found in the plastid. It localises to the chloroplast. This chain is Large ribosomal subunit protein uL2cz/uL2cy (rpl2-A), found in Dioscorea elephantipes (Elephant's foot yam).